Consider the following 678-residue polypeptide: UvrABC system protein B (678 aa).

The region spanning 35-422 (EGVSDGLMFQ…ADNVVEQVVR (388 aa)) is the Helicase ATP-binding domain. Residue 48-55 (GVTGSGKT) participates in ATP binding. The short motif at 101 to 124 (YYDYYQPEAYVPTRDLFIEKDSSI) is the Beta-hairpin element. The region spanning 439-605 (QVDDLLGEIH…GVSKAVRELI (167 aa)) is the Helicase C-terminal domain. In terms of domain architecture, UVR spans 633–668 (AREIRRLEKLMMDHARNLEFEQAAAARDALNALKSR).

It belongs to the UvrB family. As to quaternary structure, forms a heterotetramer with UvrA during the search for lesions. Interacts with UvrC in an incision complex.

It is found in the cytoplasm. Functionally, the UvrABC repair system catalyzes the recognition and processing of DNA lesions. A damage recognition complex composed of 2 UvrA and 2 UvrB subunits scans DNA for abnormalities. Upon binding of the UvrA(2)B(2) complex to a putative damaged site, the DNA wraps around one UvrB monomer. DNA wrap is dependent on ATP binding by UvrB and probably causes local melting of the DNA helix, facilitating insertion of UvrB beta-hairpin between the DNA strands. Then UvrB probes one DNA strand for the presence of a lesion. If a lesion is found the UvrA subunits dissociate and the UvrB-DNA preincision complex is formed. This complex is subsequently bound by UvrC and the second UvrB is released. If no lesion is found, the DNA wraps around the other UvrB subunit that will check the other stand for damage. The sequence is that of UvrABC system protein B from Bordetella pertussis (strain Tohama I / ATCC BAA-589 / NCTC 13251).